Here is a 147-residue protein sequence, read N- to C-terminus: MRKYETFFIIDPDLPDEVTAAVDEKIKSVVGANGGDVVSYVPWGKKKLAYPVKKRSRGLYVLMEYAGDSRLVAELERNMRLDERVLKFITVKLDDRYDPEKEAARMAANLPSFPEDEDTEEKGSAPLAREEEGIGEEAQTDEAEDKE.

The tract at residues 103–147 (AARMAANLPSFPEDEDTEEKGSAPLAREEEGIGEEAQTDEAEDKE) is disordered. A compositionally biased stretch (acidic residues) spans 133–147 (GIGEEAQTDEAEDKE).

This sequence belongs to the bacterial ribosomal protein bS6 family.

Functionally, binds together with bS18 to 16S ribosomal RNA. The polypeptide is Small ribosomal subunit protein bS6 (Syntrophobacter fumaroxidans (strain DSM 10017 / MPOB)).